The chain runs to 707 residues: Polyribonucleotide nucleotidyltransferase (707 aa).

The Mg(2+) site is built by aspartate 486 and aspartate 492. The KH domain occupies 553–612; sequence PRIHKIKINPEKIKDVIGKGGSVIRMLTEETGTIIEIEDDGTIKISATIGEKAKNAIRRI. One can recognise an S1 motif domain in the interval 622-690; that stretch reads GRIYSGKVTR…RQGRLRLSIK (69 aa).

This sequence belongs to the polyribonucleotide nucleotidyltransferase family. Component of the RNA degradosome, which is a multiprotein complex involved in RNA processing and mRNA degradation. Mg(2+) serves as cofactor.

It is found in the cytoplasm. The catalysed reaction is RNA(n+1) + phosphate = RNA(n) + a ribonucleoside 5'-diphosphate. In terms of biological role, involved in mRNA degradation. Catalyzes the phosphorolysis of single-stranded polyribonucleotides processively in the 3'- to 5'-direction. In Buchnera aphidicola subsp. Schizaphis graminum (strain Sg), this protein is Polyribonucleotide nucleotidyltransferase.